We begin with the raw amino-acid sequence, 206 residues long: Ras-related protein RABG3f (206 aa).

15 to 23 contributes to the GTP binding site; it reads GDSGVGKTS. The short motif at 37–45 is the Effector region element; sequence YKATIGADF. GTP-binding positions include 63–67, 125–128, and 158–159; these read DTAGQ, NKVD, and SA. S-geranylgeranyl cysteine attachment occurs at residues C204 and C206. C206 carries the cysteine methyl ester modification.

The protein belongs to the small GTPase superfamily. Rab family. Interacts with VPS35A.

It is found in the endosome membrane. The protein localises to the vacuole membrane. The protein resides in the prevacuolar compartment membrane. Its activity is regulated as follows. Regulated by guanine nucleotide exchange factors (GEFs) which promote the exchange of bound GDP for free GTP. Regulated by the MON1-CCZ1 complex which serves as a link between Rab5 and Rab7 protein families in PVCs and mediates PVC maturation. Its function is as follows. Essential for trafficking from prevacuolar compartments to vacuoles. Involved in the trafficking of newly synthesized protein to vacuoles. Essential for plant growth. Participates in the recruitment of the core retromer components to the endosomal membrane by interacting with VPS35A. The polypeptide is Ras-related protein RABG3f (RABG3F) (Arabidopsis thaliana (Mouse-ear cress)).